Reading from the N-terminus, the 832-residue chain is Protein P (832 aa).

Residues 1–177 (MPLSCQHFRK…FCGSPYSWEQ (177 aa)) form a terminal protein domain (TP) region. The spacer stretch occupies residues 178–335 (ELQHGAEPFC…NCLSHIVNLL (158 aa)). Positions 198–264 (SIGPAVPSQH…HNTASSSSSC (67 aa)) are disordered. The segment at 336–679 (EDWGPCTEHG…YLTLYPVARQ (344 aa)) is polymerase/reverse transcriptase domain (RT). The region spanning 346-589 (EHLIRIPRTP…YSLHFMGYVI (244 aa)) is the Reverse transcriptase domain. Asp-418, Asp-540, and Asp-541 together coordinate Mg(2+).

This sequence belongs to the hepadnaviridae P protein family.

It catalyses the reaction DNA(n) + a 2'-deoxyribonucleoside 5'-triphosphate = DNA(n+1) + diphosphate. The catalysed reaction is Endonucleolytic cleavage to 5'-phosphomonoester.. Activated by host HSP70 and HSP40 in vitro to be able to bind the epsilon loop of the pgRNA. Because deletion of the RNase H region renders the protein partly chaperone-independent, the chaperones may be needed indirectly to relieve occlusion of the RNA-binding site by this domain. Inhibited by several reverse-transcriptase inhibitors: Lamivudine, Adefovir and Entecavir. In terms of biological role, multifunctional enzyme that converts the viral RNA genome into dsDNA in viral cytoplasmic capsids. This enzyme displays a DNA polymerase activity that can copy either DNA or RNA templates, and a ribonuclease H (RNase H) activity that cleaves the RNA strand of RNA-DNA heteroduplexes in a partially processive 3'- to 5'-endonucleasic mode. Neo-synthesized pregenomic RNA (pgRNA) are encapsidated together with the P protein, and reverse-transcribed inside the nucleocapsid. Initiation of reverse-transcription occurs first by binding the epsilon loop on the pgRNA genome, and is initiated by protein priming, thereby the 5'-end of (-)DNA is covalently linked to P protein. Partial (+)DNA is synthesized from the (-)DNA template and generates the relaxed circular DNA (RC-DNA) genome. After budding and infection, the RC-DNA migrates in the nucleus, and is converted into a plasmid-like covalently closed circular DNA (cccDNA). The activity of P protein does not seem to be necessary for cccDNA generation, and is presumably released from (+)DNA by host nuclear DNA repair machinery. This chain is Protein P, found in Pongo pygmaeus (Bornean orangutan).